The following is a 629-amino-acid chain: tRNA uridine 5-carboxymethylaminomethyl modification enzyme MnmG (629 aa).

13–18 (GGGHAG) contacts FAD. 273-287 (GPRYCPSIEDKIHRF) contacts NAD(+).

The protein belongs to the MnmG family. In terms of assembly, homodimer. Heterotetramer of two MnmE and two MnmG subunits. FAD is required as a cofactor.

It is found in the cytoplasm. In terms of biological role, NAD-binding protein involved in the addition of a carboxymethylaminomethyl (cmnm) group at the wobble position (U34) of certain tRNAs, forming tRNA-cmnm(5)s(2)U34. This chain is tRNA uridine 5-carboxymethylaminomethyl modification enzyme MnmG, found in Shewanella baltica (strain OS223).